Here is a 342-residue protein sequence, read N- to C-terminus: Ribosomal RNA small subunit methyltransferase C (342 aa).

It belongs to the methyltransferase superfamily. RsmC family. As to quaternary structure, monomer.

It is found in the cytoplasm. It carries out the reaction guanosine(1207) in 16S rRNA + S-adenosyl-L-methionine = N(2)-methylguanosine(1207) in 16S rRNA + S-adenosyl-L-homocysteine + H(+). Its function is as follows. Specifically methylates the guanine in position 1207 of 16S rRNA in the 30S particle. The sequence is that of Ribosomal RNA small subunit methyltransferase C from Klebsiella pneumoniae subsp. pneumoniae (strain ATCC 700721 / MGH 78578).